Reading from the N-terminus, the 67-residue chain is Large ribosomal subunit protein bL31 (67 aa).

Zn(2+) contacts are provided by Cys16, Cys18, Cys36, and Cys39.

It belongs to the bacterial ribosomal protein bL31 family. Type A subfamily. Part of the 50S ribosomal subunit. Zn(2+) is required as a cofactor.

Functionally, binds the 23S rRNA. The polypeptide is Large ribosomal subunit protein bL31 (Treponema pallidum (strain Nichols)).